The primary structure comprises 198 residues: Nucleoid occlusion factor SlmA (198 aa).

One can recognise an HTH tetR-type domain in the interval 10–70; the sequence is NRREEILQSL…SLIEFIEDSL (61 aa). Residues 33–52 constitute a DNA-binding region (H-T-H motif); that stretch reads TTAKLAASVGVSEAALYRHF. A coiled-coil region spans residues 117 to 144; the sequence is EQDRLQGRINQLFERIEAQLRQVLREKR.

The protein belongs to the nucleoid occlusion factor SlmA family. Homodimer. Interacts with FtsZ.

The protein resides in the cytoplasm. It localises to the nucleoid. Its function is as follows. Required for nucleoid occlusion (NO) phenomenon, which prevents Z-ring formation and cell division over the nucleoid. Acts as a DNA-associated cell division inhibitor that binds simultaneously chromosomal DNA and FtsZ, and disrupts the assembly of FtsZ polymers. SlmA-DNA-binding sequences (SBS) are dispersed on non-Ter regions of the chromosome, preventing FtsZ polymerization at these regions. The protein is Nucleoid occlusion factor SlmA of Salmonella paratyphi A (strain ATCC 9150 / SARB42).